Consider the following 876-residue polypeptide: MRFLSFLIFVFAVLGLVQAQDQSGFISLDCGLVPTEITYVEKSTNITYRSDATYIDSGVPGKINEVYRTQFQQQIWALRSFPEGQRNCYNFSLTAKRKYLIRGTFIYGNYDGLNQLPSFDLYIGPNKWTSVSIPGVRNGSVSEMIHVLRQDHLQICLVKTGETTPFISSLELRPLNNNTYVTKSGSLIVVARLYFSPTPPFLRYDEDVHDRIWIPFLDNKNSLLSTELSVDTSNFYNVPQTVAKTAAVPLNATQPLKINWSLDDITSQSYIYMHFAEIENLEANETREFNITYNGGENWFSYFRPPKFRITTVYNPAAVSSLDGNFNFTFSMTGNSTHPPLINGLEIYQVLELPQLDTYQDEVSAMMNIKTIYGLSKRSSWQGDPCAPELYRWEGLNCSYPNFAPPQIISLNLSGSNLSGTITSDISKLTHLRELDLSNNDLSGDIPFVFSDMKNLTLINLSGNKNLNRSVPETLQKRIDNKSLTLIRDETGKNSTNVVAIAASVASVFAVLVILAIVFVVIRKKQRTNEASGPRSFTTGTVKSDARSSSSSIITKERKFTYSEVLKMTKNFERVLGKGGFGTVYHGNLDDTQVAVKMLSHSSAQGYKEFKAEVELLLRVHHRHLVGLVGYCDDGDNLALIYEYMEKGDLRENMSGKHSVNVLSWETRMQIAVEAAQGLEYLHNGCRPPMVHRDVKPTNILLNERSQAKLADFGLSRSFPVDGESHVMTVVAGTPGYLDPEYYRTNWLSEKSDVYSFGVVLLEIVTNQPVMNKNRERPHINEWVMFMLTNGDIKSIVDPKLNEDYDTNGVWKVVELALACVNPSSSRRPTMPHVVMELNECLALEIERKQGSQATYIKESVEFSPSSASDFSPLAR.

The signal sequence occupies residues 1–19; sequence MRFLSFLIFVFAVLGLVQA. Topologically, residues 20-500 are extracellular; it reads QDQSGFISLD…TGKNSTNVVA (481 aa). Residues N45, N90, N138, N177, N251, N259, N284, N290, N327, N335, N397, N412, and N417 are each glycosylated (N-linked (GlcNAc...) asparagine). LRR repeat units follow at residues 407-430, 431-453, and 455-476; these read QIISLNLSGSNLSGTITSDISKLT, HLRELDLSNNDLSGDIPFVFSDM, and NLTLINLSGNKNLNRSVPETLQ. N-linked (GlcNAc...) asparagine glycosylation is found at N455, N460, N468, N481, and N494. A helical membrane pass occupies residues 501–521; that stretch reads IAASVASVFAVLVILAIVFVV. At 522–872 the chain is on the cytoplasmic side; the sequence is IRKKQRTNEA…FSPSSASDFS (351 aa). Position 561 is a phosphothreonine (T561). The Protein kinase domain maps to 570-842; sequence KNFERVLGKG…HVVMELNECL (273 aa). ATP contacts are provided by residues 576-584 and K597; that span reads LGKGGFGTV. Phosphotyrosine is present on Y642. The active-site Proton acceptor is D694. Residues T729 and T734 each carry the phosphothreonine modification. Y742 carries the phosphotyrosine modification.

It belongs to the protein kinase superfamily. Ser/Thr protein kinase family.

It localises to the cell membrane. It catalyses the reaction L-seryl-[protein] + ATP = O-phospho-L-seryl-[protein] + ADP + H(+). It carries out the reaction L-threonyl-[protein] + ATP = O-phospho-L-threonyl-[protein] + ADP + H(+). This chain is Probable LRR receptor-like protein kinase At1g51890, found in Arabidopsis thaliana (Mouse-ear cress).